A 264-amino-acid chain; its full sequence is Indole-3-glycerol phosphate synthase (264 aa).

This sequence belongs to the TrpC family.

It carries out the reaction 1-(2-carboxyphenylamino)-1-deoxy-D-ribulose 5-phosphate + H(+) = (1S,2R)-1-C-(indol-3-yl)glycerol 3-phosphate + CO2 + H2O. The protein operates within amino-acid biosynthesis; L-tryptophan biosynthesis; L-tryptophan from chorismate: step 4/5. The sequence is that of Indole-3-glycerol phosphate synthase from Stenotrophomonas maltophilia (strain R551-3).